Consider the following 202-residue polypeptide: LexA repressor (202 aa).

A DNA-binding region (H-T-H motif) is located at residues 28–48 (RAEIAQQLGFRSPNAAEEHLK). Catalysis depends on for autocatalytic cleavage activity residues Ser-119 and Lys-156.

The protein belongs to the peptidase S24 family. In terms of assembly, homodimer.

The catalysed reaction is Hydrolysis of Ala-|-Gly bond in repressor LexA.. Functionally, represses a number of genes involved in the response to DNA damage (SOS response), including recA and lexA. In the presence of single-stranded DNA, RecA interacts with LexA causing an autocatalytic cleavage which disrupts the DNA-binding part of LexA, leading to derepression of the SOS regulon and eventually DNA repair. The chain is LexA repressor from Pectobacterium atrosepticum (strain SCRI 1043 / ATCC BAA-672) (Erwinia carotovora subsp. atroseptica).